The following is a 1861-amino-acid chain: Amylopullulanase (1861 aa).

The N-terminal stretch at 1 to 35 (MNKKLFTNRFISFNMSLLLVLTAVFSSIPLHSVHA) is a signal peptide. Ca(2+) is bound by residues D248, N250, D288, D343, N401, D403, N406, D407, and D453. Residues H526 and R626 each coordinate substrate. D628 acts as the Nucleophile in catalysis. E657 functions as the Proton donor in the catalytic mechanism. Substrate is bound by residues 733 to 734 (HD), D793, and R797. Fibronectin type-III domains follow at residues 929–1021 (APQA…AYPI) and 1158–1252 (KPTA…VVPI). Positions 1246-1354 (KPDVVPIKVI…INDTVYRWRD (109 aa)) constitute a CBM20 domain. A disordered region spans residues 1448-1486 (QENNSGSGTGNNNTSTSGSNSSSTGSGSTGSTSITSNIS). A compositionally biased stretch (low complexity) spans 1450–1486 (NNSGSGTGNNNTSTSGSNSSSTGSGSTGSTSITSNIS). 3 SLH domains span residues 1677-1740 (EYDK…YSGE), 1741-1799 (FSDV…KEEN), and 1802-1861 (ATTF…SGNI).

It belongs to the glycosyl hydrolase 13 family. The cofactor is Ca(2+). Glycosylated.

Its subcellular location is the secreted. It localises to the cell wall. It carries out the reaction Endohydrolysis of (1-&gt;4)-alpha-D-glucosidic linkages in polysaccharides containing three or more (1-&gt;4)-alpha-linked D-glucose units.. It catalyses the reaction Hydrolysis of (1-&gt;6)-alpha-D-glucosidic linkages in pullulan, amylopectin and glycogen, and in the alpha- and beta-limit dextrins of amylopectin and glycogen.. The protein is Amylopullulanase (amyB) of Thermoanaerobacterium thermosulfurigenes (Clostridium thermosulfurogenes).